The chain runs to 234 residues: MKKTFFIADLHLSENRPHLTELFVHFMQTQAPQAEKLYILGDLFDFWIGDDEQSALIETVQQQILQLTQKGISCYFIHGNRDFLVGRQFANSCGMELLPTYQIVNLYGKKVLICHGDTLCTDDLAYQQYRKKVQQKWLQWLFLHLPLKVRLKIAEKIRQKSKTDKTHKSIEIMDVNKDFVEQIMQQFQVNILIHGHTHKQNIHQNPPHFTRIVLGDWGATASVLEVSANGFQFI.

Residues Asp9, His11, Asp42, Asn80, and His115 each coordinate Mn(2+). 80 to 81 serves as a coordination point for substrate; that stretch reads NR. Substrate is bound by residues Asp123, Ser161, Lys165, Lys168, and His196. Positions 196 and 198 each coordinate Mn(2+).

Belongs to the LpxH family. Requires Mn(2+) as cofactor.

It localises to the cell inner membrane. The catalysed reaction is UDP-2-N,3-O-bis[(3R)-3-hydroxytetradecanoyl]-alpha-D-glucosamine + H2O = 2-N,3-O-bis[(3R)-3-hydroxytetradecanoyl]-alpha-D-glucosaminyl 1-phosphate + UMP + 2 H(+). It functions in the pathway glycolipid biosynthesis; lipid IV(A) biosynthesis; lipid IV(A) from (3R)-3-hydroxytetradecanoyl-[acyl-carrier-protein] and UDP-N-acetyl-alpha-D-glucosamine: step 4/6. Hydrolyzes the pyrophosphate bond of UDP-2,3-diacylglucosamine to yield 2,3-diacylglucosamine 1-phosphate (lipid X) and UMP by catalyzing the attack of water at the alpha-P atom. Involved in the biosynthesis of lipid A, a phosphorylated glycolipid that anchors the lipopolysaccharide to the outer membrane of the cell. The protein is UDP-2,3-diacylglucosamine hydrolase of Histophilus somni (strain 2336) (Haemophilus somnus).